The sequence spans 308 residues: Probable manganese-dependent inorganic pyrophosphatase (308 aa).

Residues His-9, Asp-13, Asp-15, Asp-75, His-97, and Asp-149 each contribute to the Mn(2+) site.

The protein belongs to the PPase class C family. The cofactor is Mn(2+).

It is found in the cytoplasm. The enzyme catalyses diphosphate + H2O = 2 phosphate + H(+). The chain is Probable manganese-dependent inorganic pyrophosphatase from Enterococcus faecalis (strain ATCC 700802 / V583).